Reading from the N-terminus, the 534-residue chain is tRNA uridine(34) acetyltransferase (534 aa).

A radical S-adenosyl-L-methionine (rSAM) region spans residues K70–E330. Residues R73 to K344 form the Radical SAM core domain. 3 residues coordinate [4Fe-4S] cluster: C90, C95, and C98. Residue K150 coordinates acetyl-CoA. A disulfide bond links C384 and C389. Residues I387–L534 enclose the N-acetyltransferase domain. Acetyl-CoA-binding positions include Q461–V464, Y485–R487, and Y518.

It belongs to the ELP3 family. [4Fe-4S] cluster serves as cofactor.

The enzyme catalyses uridine(34) in tRNA + acetyl-CoA + S-adenosyl-L-methionine + H2O = 5-(carboxymethyl)uridine(34) in tRNA + 5'-deoxyadenosine + L-methionine + CoA + 2 H(+). Its pathway is tRNA modification. In terms of biological role, tRNA uridine(34) acetyltransferase, which mediates formation of carboxymethyluridine in the wobble base at position 34 in tRNAs. The proposed mechanism is the following: (i) recruits S-adenosyl-L-methionine and cleaves it to generate a 5'-deoxyadenosine radical (5'-dA) in the radical S-adenosyl-L-methionine (rSAM) region, (ii) hydrolyzes acetyl-CoA in the N-acetyltransferase domain and (iii) an acetyl radical is formed by the products of the two domains and (iv) is transferred onto the C5 position of uridine(34) in the bound tRNA molecule. Does not show protein lysine acetyltransferase activity. This is tRNA uridine(34) acetyltransferase from Methanocaldococcus infernus (strain DSM 11812 / JCM 15783 / ME).